Consider the following 154-residue polypeptide: Endoribonuclease YbeY (154 aa).

The Zn(2+) site is built by H114, H118, and H124.

It belongs to the endoribonuclease YbeY family. Zn(2+) serves as cofactor.

The protein resides in the cytoplasm. Functionally, single strand-specific metallo-endoribonuclease involved in late-stage 70S ribosome quality control and in maturation of the 3' terminus of the 16S rRNA. This chain is Endoribonuclease YbeY, found in Marinomonas sp. (strain MWYL1).